Here is a 186-residue protein sequence, read N- to C-terminus: UPF0301 protein Neut_0448 (186 aa).

The protein belongs to the UPF0301 (AlgH) family.

This chain is UPF0301 protein Neut_0448, found in Nitrosomonas eutropha (strain DSM 101675 / C91 / Nm57).